Consider the following 278-residue polypeptide: 4-hydroxy-tetrahydrodipicolinate reductase (278 aa).

NAD(+) is bound by residues 16-21 (GAGGRM) and glutamate 42. Arginine 43 contributes to the NADP(+) binding site. Residues 106–108 (GTT) and 130–133 (AGNY) each bind NAD(+). Histidine 163 functions as the Proton donor/acceptor in the catalytic mechanism. (S)-2,3,4,5-tetrahydrodipicolinate is bound at residue histidine 164. Catalysis depends on lysine 167, which acts as the Proton donor. 173–174 (GT) provides a ligand contact to (S)-2,3,4,5-tetrahydrodipicolinate.

It belongs to the DapB family.

It is found in the cytoplasm. It carries out the reaction (S)-2,3,4,5-tetrahydrodipicolinate + NAD(+) + H2O = (2S,4S)-4-hydroxy-2,3,4,5-tetrahydrodipicolinate + NADH + H(+). The catalysed reaction is (S)-2,3,4,5-tetrahydrodipicolinate + NADP(+) + H2O = (2S,4S)-4-hydroxy-2,3,4,5-tetrahydrodipicolinate + NADPH + H(+). It functions in the pathway amino-acid biosynthesis; L-lysine biosynthesis via DAP pathway; (S)-tetrahydrodipicolinate from L-aspartate: step 4/4. Functionally, catalyzes the conversion of 4-hydroxy-tetrahydrodipicolinate (HTPA) to tetrahydrodipicolinate. The sequence is that of 4-hydroxy-tetrahydrodipicolinate reductase from Psychrobacter arcticus (strain DSM 17307 / VKM B-2377 / 273-4).